A 169-amino-acid polypeptide reads, in one-letter code: MGMFIQKEHKPTMAEEEHVDFEGGEAGASLTFPMQCSALRKNGHVVIKGRPCKIVDMSTSKTGKHGHAKVHIVALDIFNGRKYEDMSPSTHNMDVPVVKRDEYQLVNIDDGYLNLMTTDGTTKDDVRLPEGELGNEIEEGFEEGKDLIITVVSAMGEEIALACRDAPSA.

At K64 the chain carries Hypusine.

It belongs to the eIF-5A family. In terms of processing, lys-51 undergoes hypusination, a unique post-translational modification that consists in the addition of a butylamino group from spermidine to lysine side chain, leading to the formation of the unusual amino acid hypusine. eIF-5As are the only known proteins to undergo this modification, which is essential for their function.

It localises to the cytoplasm. It is found in the nucleus. Its function is as follows. Translation factor that promotes translation elongation and termination, particularly upon ribosome stalling at specific amino acid sequence contexts. Binds between the exit (E) and peptidyl (P) site of the ribosome and promotes rescue of stalled ribosome: specifically required for efficient translation of polyproline-containing peptides as well as other motifs that stall the ribosome. Acts as a ribosome quality control (RQC) cofactor by joining the RQC complex to facilitate peptidyl transfer during CAT tailing step. This Schizosaccharomyces pombe (strain 972 / ATCC 24843) (Fission yeast) protein is Eukaryotic translation initiation factor 5A-2 (tif51b).